The sequence spans 149 residues: Hut operon positive regulatory protein (149 aa).

Belongs to the HutP family. Homohexamer.

Functionally, antiterminator that binds to cis-acting regulatory sequences on the mRNA in the presence of histidine, thereby suppressing transcription termination and activating the hut operon for histidine utilization. The sequence is that of Hut operon positive regulatory protein from Geobacillus sp. (strain WCH70).